A 354-amino-acid polypeptide reads, in one-letter code: Hyaluronan and proteoglycan link protein 1 (354 aa).

Residues Met1–Ala15 constitute a propeptide that is removed on maturation. Asn21 and Asn56 each carry an N-linked (GlcNAc...) asparagine glycan. The region spanning Pro38–Val152 is the Ig-like V-type domain. 5 cysteine pairs are disulfide-bonded: Cys61–Cys139, Cys181–Cys252, Cys205–Cys226, Cys279–Cys349, and Cys304–Cys325. 2 Link domains span residues Val159–Thr254 and Gly259–Arg351.

The protein belongs to the HAPLN family. As to expression, widely expressed. Weakly expressed in the brain.

It is found in the secreted. It localises to the extracellular space. The protein localises to the extracellular matrix. Its function is as follows. Stabilizes the aggregates of proteoglycan monomers with hyaluronic acid in the extracellular cartilage matrix. The protein is Hyaluronan and proteoglycan link protein 1 (HAPLN1) of Homo sapiens (Human).